The following is a 95-amino-acid chain: Co-chaperonin GroES (95 aa).

It belongs to the GroES chaperonin family. Heptamer of 7 subunits arranged in a ring. Interacts with the chaperonin GroEL.

The protein resides in the cytoplasm. In terms of biological role, together with the chaperonin GroEL, plays an essential role in assisting protein folding. The GroEL-GroES system forms a nano-cage that allows encapsulation of the non-native substrate proteins and provides a physical environment optimized to promote and accelerate protein folding. GroES binds to the apical surface of the GroEL ring, thereby capping the opening of the GroEL channel. This chain is Co-chaperonin GroES, found in Xylella fastidiosa (strain M23).